The chain runs to 262 residues: Tetratricopeptide repeat protein 33 (262 aa).

TPR repeat units lie at residues 59–92 (SKQL…TPND), 93–126 (ATLY…NPHS), and 127–160 (WESW…YPMN). Ser197 bears the Phosphoserine mark. Position 251 is a phosphothreonine (Thr251).

The sequence is that of Tetratricopeptide repeat protein 33 (TTC33) from Homo sapiens (Human).